Reading from the N-terminus, the 389-residue chain is Ethanolamine-phosphate cytidylyltransferase (389 aa).

Residues Met1–Arg20 are disordered. Residues Ala221 to Phe222, His229 to Phe232, Lys259, His307 to Thr310, and Ser336 to Leu340 each bind CTP. The residue at position 338 (Ser338) is a Phosphoserine. A phosphothreonine mark is found at Thr341 and Thr342.

It belongs to the cytidylyltransferase family. As to expression, strongest expression in liver, heart, and skeletal muscle.

It catalyses the reaction phosphoethanolamine + CTP + H(+) = CDP-ethanolamine + diphosphate. The protein operates within phospholipid metabolism; phosphatidylethanolamine biosynthesis; phosphatidylethanolamine from ethanolamine: step 2/3. Its function is as follows. Ethanolamine-phosphate cytidylyltransferase that catalyzes the second step in the synthesis of phosphatidylethanolamine (PE) from ethanolamine via the CDP-ethanolamine pathway. Phosphatidylethanolamine is a dominant inner-leaflet phospholipid in cell membranes, where it plays a role in membrane function by structurally stabilizing membrane-anchored proteins, and participates in important cellular processes such as cell division, cell fusion, blood coagulation, and apoptosis. This is Ethanolamine-phosphate cytidylyltransferase (PCYT2) from Homo sapiens (Human).